The following is a 438-amino-acid chain: Glucose-6-phosphate isomerase (438 aa).

Glu-289 acts as the Proton donor in catalysis. Residues His-310 and Lys-424 contribute to the active site.

It belongs to the GPI family.

It is found in the cytoplasm. The enzyme catalyses alpha-D-glucose 6-phosphate = beta-D-fructose 6-phosphate. It functions in the pathway carbohydrate biosynthesis; gluconeogenesis. The protein operates within carbohydrate degradation; glycolysis; D-glyceraldehyde 3-phosphate and glycerone phosphate from D-glucose: step 2/4. Its function is as follows. Catalyzes the reversible isomerization of glucose-6-phosphate to fructose-6-phosphate. The polypeptide is Glucose-6-phosphate isomerase (Oenococcus oeni (strain ATCC BAA-331 / PSU-1)).